The following is a 142-amino-acid chain: 3-hydroxyacyl-[acyl-carrier-protein] dehydratase FabZ (142 aa).

His-48 is an active-site residue.

The protein belongs to the thioester dehydratase family. FabZ subfamily.

The protein resides in the cytoplasm. It catalyses the reaction a (3R)-hydroxyacyl-[ACP] = a (2E)-enoyl-[ACP] + H2O. Involved in unsaturated fatty acids biosynthesis. Catalyzes the dehydration of short chain beta-hydroxyacyl-ACPs and long chain saturated and unsaturated beta-hydroxyacyl-ACPs. The polypeptide is 3-hydroxyacyl-[acyl-carrier-protein] dehydratase FabZ (Clostridioides difficile (strain 630) (Peptoclostridium difficile)).